The primary structure comprises 139 residues: Putative pre-16S rRNA nuclease (139 aa).

The protein belongs to the YqgF nuclease family.

Its subcellular location is the cytoplasm. Functionally, could be a nuclease involved in processing of the 5'-end of pre-16S rRNA. This Proteus mirabilis (strain HI4320) protein is Putative pre-16S rRNA nuclease.